The chain runs to 143 residues: Putative transmembrane protein ORF32 (143 aa).

2 helical membrane-spanning segments follow: residues 20–42 (GISG…SFTL) and 52–74 (WPLI…EGGV).

It is found in the host membrane. The polypeptide is Putative transmembrane protein ORF32 (Haloarcula hispanica (His1V)).